The primary structure comprises 492 residues: Catalase-2 (492 aa).

Residues histidine 65 and asparagine 138 contribute to the active site. Heme is bound at residue tyrosine 348.

Belongs to the catalase family. Homotetramer and heterotetramer. At least six or seven isozymes are produced from a mixture of 3 gene products. Interacts with NCA1. Interacts with LSD1. The cofactor is heme.

It is found in the cytoplasm. The protein resides in the cytosol. It localises to the peroxisome matrix. The enzyme catalyses 2 H2O2 = O2 + 2 H2O. In terms of biological role, catalyzes the degradation of hydrogen peroxide (H(2)O(2)) generated by peroxisomal oxidases to water and oxygen, thereby protecting cells from the toxic effects of hydrogen peroxide. This is Catalase-2 (CAT2) from Arabidopsis thaliana (Mouse-ear cress).